The following is a 1009-amino-acid chain: Rho-type GTPase-activating protein 2 (1009 aa).

LIM zinc-binding domains follow at residues 11–68 (SLCV…DCSD) and 69–129 (KCTN…LLRK). Positions 143-155 (KEDFPIKLPERSV) are enriched in basic and acidic residues. 5 disordered regions span residues 143 to 228 (KEDF…RTVS), 358 to 433 (TKEN…LSRS), 449 to 608 (TSEM…DATD), 664 to 709 (TREK…ASPK), and 723 to 780 (QVGD…DYTP). Residues 162–196 (TRINGKSDVSTNNTAISKNLVSSNEDQQLTPQVLV) are compositionally biased toward polar residues. The span at 212-222 (DNSKDREETSS) shows a compositional bias: basic and acidic residues. Polar residues-rich tracts occupy residues 363 to 385 (KSSQ…ITRT) and 399 to 414 (LRLS…QTAD). Positions 481–491 (NIRKSKAKKNP) are enriched in basic residues. Composition is skewed to polar residues over residues 493 to 510 (SRGQ…QHGN) and 522 to 553 (QSSL…SSSG). Basic and acidic residues predominate over residues 664–682 (TREKDKQSASSRESLEQKE). Polar residues-rich tracts occupy residues 683-707 (NIAT…SNAS) and 728-749 (ESQQ…QKEI). Position 763 is a phosphoserine (S763). One can recognise a Rho-GAP domain in the interval 788–1006 (SSLQARCAYE…FILGNYRDIF (219 aa)).

Functionally, GTPase-activating protein (GAP) for CDC42 and/or RHO1. The polypeptide is Rho-type GTPase-activating protein 2 (RGA2) (Saccharomyces cerevisiae (strain ATCC 204508 / S288c) (Baker's yeast)).